A 600-amino-acid chain; its full sequence is Alpha-N-acetylgalactosaminide alpha-2,6-sialyltransferase 1 (600 aa).

The Cytoplasmic portion of the chain corresponds to 1–14 (MRSCLWRCRHLSQG). Residues 15–35 (VQWSLLLAVLVFFLFALPSFI) form a helical; Signal-anchor for type II membrane protein membrane-spanning segment. Residues 36 to 600 (KEPQTKPSRH…PGPGTAKAKN (565 aa)) lie on the Lumenal side of the membrane. Disordered stretches follow at residues 38 to 191 (PQTK…AATT) and 208 to 248 (GAVS…TQRN). Positions 46–55 (QRTENIKERS) are enriched in basic and acidic residues. 3 stretches are compositionally biased toward polar residues: residues 84–94 (NALNTQTQPKA), 151–179 (TEAQSWKSQDTKTTQGNGGQTRKLTASRT), and 209–219 (AVSTRTRQKGV). Cystine bridges form between Cys-279–Cys-362 and Cys-365–Cys-533. N-linked (GlcNAc...) asparagine glycosylation is found at Asn-300, Asn-311, Asn-331, Asn-375, and Asn-460.

It belongs to the glycosyltransferase 29 family. Post-translationally, glycosylated; autosialylated. Expression is restricted to the gastrointestinal tract. Highly expressed in goblet cells. Also expressed in various tumor cells.

The protein localises to the golgi apparatus membrane. It carries out the reaction a beta-D-galactosyl-(1-&gt;3)-N-acetyl-alpha-D-galactosaminyl derivative + CMP-N-acetyl-beta-neuraminate = a beta-D-galactosyl-(1-&gt;3)-[N-acetyl-alpha-neuraminyl-(2-&gt;6)]-N-acetyl-alpha-D-galactosaminyl derivative + CMP + H(+). The catalysed reaction is a 3-O-[N-acetyl-alpha-D-galactosaminyl]-L-seryl-[protein] + CMP-N-acetyl-beta-neuraminate = a 3-O-[N-acetyl-alpha-neuraminosyl-(2-&gt;6)-N-acetyl-alpha-D-galactosaminyl]-L-seryl-[protein] + CMP + H(+). The enzyme catalyses a 3-O-[N-acetyl-alpha-D-galactosaminyl]-L-threonyl-[protein] + CMP-N-acetyl-beta-neuraminate = a 3-O-[N-acetyl-alpha-neuraminosyl-(2-&gt;6)-N-acetyl-alpha-D-galactosaminyl]-L-threonyl-[protein] + CMP + H(+). It catalyses the reaction a 3-O-[beta-D-galactosyl-(1-&gt;3)-N-acetyl-alpha-D-galactosaminyl]-L-seryl-[protein] + CMP-N-acetyl-beta-neuraminate = a 3-O-{beta-D-galactosyl-(1-&gt;3)-[N-acetyl-alpha-neuraminosyl-(2-&gt;6)]-N-acetyl-alpha-D-galactosaminyl}-L-seryl-[protein] + CMP + H(+). It carries out the reaction a 3-O-[beta-D-galactosyl-(1-&gt;3)-N-acetyl-alpha-D-galactosaminyl]-L-threonyl-[protein] + CMP-N-acetyl-beta-neuraminate = a 3-O-{beta-D-galactosyl-(1-&gt;3)-[N-acetyl-alpha-neuraminosyl-(2-&gt;6)]-N-acetyl-alpha-D-galactosaminyl}-L-threonyl-[protein] + CMP + H(+). The catalysed reaction is a 3-O-[N-acetyl-alpha-neuraminyl-(2-&gt;3)-beta-D-galactosyl-(1-&gt;3)-N-acetyl-alpha-D-galactosaminyl]-L-threonyl-[protein] + CMP-N-acetyl-beta-neuraminate = a 3-O-{alpha-Neu5Ac-(2-&gt;3)-beta-D-Gal-(1-&gt;3)-[alpha-Neu5Ac-(2-&gt;6)]-alpha-D-GalNAc}-L-threonyl-[protein] + CMP + H(+). It participates in protein modification; protein glycosylation. Functionally, protein sialyltransferase specifically expressed in goblet cells that plays a key role in intestinal host-commensal homeostasis. Conjugates sialic acid with an alpha-2-6 linkage to N-acetylgalactosamine (GalNAc) glycan chains linked to serine or threonine in glycoproteins. Catalyzes the formation of the sialyl-Tn (S-Tn) antigen, an antigen found in intestinal goblet cells, as well as ulcerative colitis (UC) and various cancers. Protein sialylation in globlet cells is essential for mucus integrity and is required to protect the intestinal mucus against excessive bacterial proteolytic degradation. The protein is Alpha-N-acetylgalactosaminide alpha-2,6-sialyltransferase 1 of Homo sapiens (Human).